The sequence spans 241 residues: Anti-Pycsar protein Apyc1 (241 aa).

Residues 17 to 215 (DNNNALLEQD…SVQKKTWLMH (199 aa)) are beta-lactamase-like. Histidine 59, histidine 61, aspartate 63, histidine 64, histidine 142, aspartate 162, and histidine 215 together coordinate Zn(2+).

The protein belongs to the nuclease anti-Pycsar protein Apyc1 family. As to quaternary structure, homodimer. Zn(2+) serves as cofactor.

It carries out the reaction 3',5'-cyclic CMP + H2O = CMP + H(+). The catalysed reaction is 3',5'-cyclic UMP + H2O = UMP + H(+). Functionally, counteracts the endogenous Pycsar antiviral defense system. Phosphodiesterase that enables metal-dependent hydrolysis of host cyclic nucleotide Pycsar defense signals such as cCMP and cUMP. This chain is Anti-Pycsar protein Apyc1, found in Paenibacillus harenae.